Consider the following 162-residue polypeptide: Phosphopantetheine adenylyltransferase (162 aa).

A substrate-binding site is contributed by threonine 9. Residues 9–10 and histidine 17 contribute to the ATP site; that span reads TF. Residues lysine 41, leucine 73, and arginine 87 each contribute to the substrate site. Residues 88–90, glutamate 98, and 123–129 each bind ATP; these read GLR and LSYISSS.

The protein belongs to the bacterial CoaD family. In terms of assembly, homohexamer. Mg(2+) is required as a cofactor.

Its subcellular location is the cytoplasm. The enzyme catalyses (R)-4'-phosphopantetheine + ATP + H(+) = 3'-dephospho-CoA + diphosphate. It functions in the pathway cofactor biosynthesis; coenzyme A biosynthesis; CoA from (R)-pantothenate: step 4/5. Reversibly transfers an adenylyl group from ATP to 4'-phosphopantetheine, yielding dephospho-CoA (dPCoA) and pyrophosphate. In Teredinibacter turnerae (strain ATCC 39867 / T7901), this protein is Phosphopantetheine adenylyltransferase.